A 71-amino-acid polypeptide reads, in one-letter code: DNA gyrase inhibitor YacG (71 aa).

Zn(2+) contacts are provided by Cys7, Cys10, Cys26, and Cys30.

It belongs to the DNA gyrase inhibitor YacG family. As to quaternary structure, interacts with GyrB. The cofactor is Zn(2+).

Functionally, inhibits all the catalytic activities of DNA gyrase by preventing its interaction with DNA. Acts by binding directly to the C-terminal domain of GyrB, which probably disrupts DNA binding by the gyrase. The protein is DNA gyrase inhibitor YacG of Shewanella amazonensis (strain ATCC BAA-1098 / SB2B).